The following is a 320-amino-acid chain: MLRRKTQAETNRLNHHIIELLFRQTTRFFAIFVFLLLAAVMTSLVFGSWDSFSTFGFSFLWHNDWNPVQESYGAIIPIVGTLITSFLALIIAVPISFGIAIFLTELAPEWLRRPVGTAIEMLAAIPSIIYGMWGLFIFVPLFQEHIQPSLIEWFGDLPVFSYLFSGAPFGIGLFTAGLVLAIMIIPFIAAVMRDVFTIVPAILKESAYGLGSTTWEVMWKVVLPYTKTGVVGGIMLGLGRALGETMAVTFVIGNAFHLPESLFSPSTSIASAIANEFNEASGLQKSALMELGLILFLITTVVLSISRLLIMRIEKKEGRK.

The Cytoplasmic segment spans residues 1–27; sequence MLRRKTQAETNRLNHHIIELLFRQTTR. The helical transmembrane segment at 28–50 threads the bilayer; it reads FFAIFVFLLLAAVMTSLVFGSWD. Residues 51–80 lie on the Periplasmic side of the membrane; that stretch reads SFSTFGFSFLWHNDWNPVQESYGAIIPIVG. An ABC transmembrane type-1 domain is found at 78–306; that stretch reads IVGTLITSFL…LITTVVLSIS (229 aa). Residues 81–103 traverse the membrane as a helical segment; it reads TLITSFLALIIAVPISFGIAIFL. The Cytoplasmic segment spans residues 104–114; that stretch reads TELAPEWLRRP. A helical membrane pass occupies residues 115-137; sequence VGTAIEMLAAIPSIIYGMWGLFI. Over 138–168 the chain is Periplasmic; sequence FVPLFQEHIQPSLIEWFGDLPVFSYLFSGAP. Residues 169–191 form a helical membrane-spanning segment; that stretch reads FGIGLFTAGLVLAIMIIPFIAAV. Residues 192-229 lie on the Cytoplasmic side of the membrane; sequence MRDVFTIVPAILKESAYGLGSTTWEVMWKVVLPYTKTG. Residues 230–252 form a helical membrane-spanning segment; it reads VVGGIMLGLGRALGETMAVTFVI. The Periplasmic portion of the chain corresponds to 253 to 287; sequence GNAFHLPESLFSPSTSIASAIANEFNEASGLQKSA. The helical transmembrane segment at 288–310 threads the bilayer; it reads LMELGLILFLITTVVLSISRLLI. The Cytoplasmic portion of the chain corresponds to 311–320; that stretch reads MRIEKKEGRK.

The protein belongs to the binding-protein-dependent transport system permease family. CysTW subfamily.

It localises to the cell inner membrane. Functionally, part of the binding-protein-dependent transport system for phosphate; probably responsible for the translocation of the substrate across the membrane. The polypeptide is Phosphate transport system permease protein PstC (pstC) (Pasteurella multocida (strain Pm70)).